The chain runs to 193 residues: uncharacterized protein (193 aa).

4 helical membrane passes run 8 to 28, 46 to 66, 82 to 102, and 141 to 161; these read GVLV…VVAI, FFIA…VASA, GLSI…ALVV, and IALT…LLAA.

This sequence to M.leprae ML1222.

The protein localises to the cell membrane. This is an uncharacterized protein from Mycobacterium tuberculosis (strain CDC 1551 / Oshkosh).